A 442-amino-acid polypeptide reads, in one-letter code: MALVTPRTLSGFKDRLPKEALAKAHLLNKVSNVFMNFGFVPIETPHLEYADVLIKQGSDEIQKELYRFKDHGGRDVALRFDLTVPLARFVSQYKNEVGLPFKRYAIGNVFRGERAQRGRYREFTQCDFDFIGSDSISCDAEILQVIYASLMKLGIEEFTIWLNHRSILNGICEYCGITQEKDINVALRIIDKLDKIGKERVSEELQKELGLNNNQVENLLEYTSIKQQGESESFFRQISFMEEWNDSIKKGIEDLKMLYEVLSSLQMDRDTYRVNFSIARGLGYYTGIVYETTLNALKSIGSVCSGGRYDNLTRTFSKEKMSGVGASIGIDRLLAALEELELLQKRATSARALIVCMDRLYFGYAHLLAESFRCSEIPIEVYPEASKLKKQFTYAHLKGYEFVVVIGENEFNTKTLTLKNMTSGVQIDSISFLKALALIQEE.

It belongs to the class-II aminoacyl-tRNA synthetase family. As to quaternary structure, homodimer.

Its subcellular location is the cytoplasm. The catalysed reaction is tRNA(His) + L-histidine + ATP = L-histidyl-tRNA(His) + AMP + diphosphate + H(+). The protein is Histidine--tRNA ligase of Helicobacter hepaticus (strain ATCC 51449 / 3B1).